The sequence spans 1400 residues: DNA-directed RNA polymerase subunit beta' (1400 aa).

4 residues coordinate Zn(2+): Cys-70, Cys-72, Cys-85, and Cys-88. Residues Asp-460, Asp-462, and Asp-464 each contribute to the Mg(2+) site. The Zn(2+) site is built by Cys-814, Cys-887, Cys-894, and Cys-897.

Belongs to the RNA polymerase beta' chain family. As to quaternary structure, the RNAP catalytic core consists of 2 alpha, 1 beta, 1 beta' and 1 omega subunit. When a sigma factor is associated with the core the holoenzyme is formed, which can initiate transcription. Mg(2+) serves as cofactor. Zn(2+) is required as a cofactor.

The catalysed reaction is RNA(n) + a ribonucleoside 5'-triphosphate = RNA(n+1) + diphosphate. Functionally, DNA-dependent RNA polymerase catalyzes the transcription of DNA into RNA using the four ribonucleoside triphosphates as substrates. This chain is DNA-directed RNA polymerase subunit beta', found in Marinomonas sp. (strain MWYL1).